Here is a 185-residue protein sequence, read N- to C-terminus: Acireductone dioxygenase (185 aa).

Residues 1-23 are disordered; the sequence is MSRLSIHPEGNTNATSPAEPLLE. Positions 102, 104, 108, and 146 each coordinate Fe(2+). Positions 102, 104, 108, and 146 each coordinate Ni(2+).

This sequence belongs to the acireductone dioxygenase (ARD) family. As to quaternary structure, monomer. Fe(2+) serves as cofactor. The cofactor is Ni(2+).

The enzyme catalyses 1,2-dihydroxy-5-(methylsulfanyl)pent-1-en-3-one + O2 = 3-(methylsulfanyl)propanoate + CO + formate + 2 H(+). The catalysed reaction is 1,2-dihydroxy-5-(methylsulfanyl)pent-1-en-3-one + O2 = 4-methylsulfanyl-2-oxobutanoate + formate + 2 H(+). The protein operates within amino-acid biosynthesis; L-methionine biosynthesis via salvage pathway; L-methionine from S-methyl-5-thio-alpha-D-ribose 1-phosphate: step 5/6. Functionally, catalyzes 2 different reactions between oxygen and the acireductone 1,2-dihydroxy-3-keto-5-methylthiopentene (DHK-MTPene) depending upon the metal bound in the active site. Fe-containing acireductone dioxygenase (Fe-ARD) produces formate and 2-keto-4-methylthiobutyrate (KMTB), the alpha-ketoacid precursor of methionine in the methionine recycle pathway. Ni-containing acireductone dioxygenase (Ni-ARD) produces methylthiopropionate, carbon monoxide and formate, and does not lie on the methionine recycle pathway. The polypeptide is Acireductone dioxygenase (Prochlorococcus marinus (strain MIT 9303)).